We begin with the raw amino-acid sequence, 691 residues long: Elongation factor G (691 aa).

The tr-type G domain maps to 8–283; it reads EDYRNFGIMA…AVVDYLPTPI (276 aa). GTP-binding positions include 17–24, 81–85, and 135–138; these read AHIDAGKT, DTPGH, and NKMD.

The protein belongs to the TRAFAC class translation factor GTPase superfamily. Classic translation factor GTPase family. EF-G/EF-2 subfamily.

The protein localises to the cytoplasm. Its function is as follows. Catalyzes the GTP-dependent ribosomal translocation step during translation elongation. During this step, the ribosome changes from the pre-translocational (PRE) to the post-translocational (POST) state as the newly formed A-site-bound peptidyl-tRNA and P-site-bound deacylated tRNA move to the P and E sites, respectively. Catalyzes the coordinated movement of the two tRNA molecules, the mRNA and conformational changes in the ribosome. The polypeptide is Elongation factor G (Beijerinckia indica subsp. indica (strain ATCC 9039 / DSM 1715 / NCIMB 8712)).